A 222-amino-acid chain; its full sequence is Glutathione S-transferase 3 (222 aa).

One can recognise a GST N-terminal domain in the interval 2–83 (APLKLYGMPL…YIASKYASEG (82 aa)). Residues Ser12, 13–14 (PN), 41–42 (HK), 54–55 (QI), and 67–68 (ES) each bind glutathione. The region spanning 89–219 (ATASAAKLEV…AAIPLPPPPS (131 aa)) is the GST C-terminal domain.

This sequence belongs to the GST superfamily. Phi family. In terms of assembly, homodimer.

The catalysed reaction is RX + glutathione = an S-substituted glutathione + a halide anion + H(+). Its function is as follows. Conjugation of reduced glutathione to a wide number of exogenous and endogenous hydrophobic electrophiles. Involved in the detoxification of certain herbicides. The polypeptide is Glutathione S-transferase 3 (Zea mays (Maize)).